We begin with the raw amino-acid sequence, 749 residues long: uncharacterized protein (749 aa).

Disordered stretches follow at residues 1–58, 124–170, 200–291, and 385–405; these read MGTV…QPSN, DANA…PSPL, SRFS…PPVS, and YTWSRHSTSGPSRSTVLNPST. Residues 13–24 are compositionally biased toward low complexity; the sequence is LNNGLSSNNGSS. 4 stretches are compositionally biased toward polar residues: residues 149 to 159, 238 to 252, 265 to 275, and 388 to 405; these read KSASKDSNAFN, ESKTSPFATRRPSLN, LNYQNSSLNPS, and SRHSTSGPSRSTVLNPST. One can recognise a PSP1 C-terminal domain in the interval 644-729; it reads KRILRKAQPH…YKTRIWMCAV (86 aa).

This is an uncharacterized protein from Schizosaccharomyces pombe (strain 972 / ATCC 24843) (Fission yeast).